Reading from the N-terminus, the 283-residue chain is tRNA pseudouridine synthase B (283 aa).

The active-site Nucleophile is Asp38.

This sequence belongs to the pseudouridine synthase TruB family. Type 1 subfamily.

It carries out the reaction uridine(55) in tRNA = pseudouridine(55) in tRNA. Functionally, responsible for synthesis of pseudouridine from uracil-55 in the psi GC loop of transfer RNAs. This is tRNA pseudouridine synthase B from Onion yellows phytoplasma (strain OY-M).